The chain runs to 423 residues: MLVHSYSSMERADGLSSSSPGGRLSQLNQAAYSSAPPLCHTPASDFQPPYFPPPYPQSSLSYSQSQDGGYPHLPEPYPSLNSLHQHQQAAWHSQRSRSEDAGLLSQPHRALSLDPRREYPGVPRLLTHGLGDGAAALGDGPLGMHAVHHGLDDIQGLEEASALGILDHSVIKKVPLPSKLNGSTISALSLSKEGLGLGGVSNPAEVFCSVPGRLSLLSSTSKYKVTVGEVQRRLAPPECLNASLLGGVLRRAKSKNGGRCLRERLEKIGLNLPAGRRKAANVTLLTALVEGEAVHLARDFGYVCETEFPARATAEYLCRQTEPDQLPTRRSMLLATKEICKEFVDLMSQDRSPLGASRPTPCLEPGVQSSLTHFSLLTHGFGTPALCAALSAFQSYLLEALKLLDKGENGGKNHHDKELKHRK.

Residues 1-108 (MLVHSYSSME…EDAGLLSQPH (108 aa)) form a disordered region. Over residues 14–27 (GLSSSSPGGRLSQL) the composition is skewed to low complexity. The PPxY motif motif lies at 50-55 (YFPPPY). Low complexity predominate over residues 57-70 (QSSLSYSQSQDGGY). A compositionally biased stretch (polar residues) spans 79–93 (SLNSLHQHQQAAWHS). The tract at residues 276 to 405 (RRKAANVTLL…YLLEALKLLD (130 aa)) is H-S-H (helix-span-helix), dimerization.

It belongs to the AP-2 family. Binds DNA as a dimer. Can form homodimers or heterodimers with other AP-2 family members.

It is found in the nucleus. Sequence-specific DNA-binding protein that interacts with inducible viral and cellular enhancer elements to regulate transcription of selected genes. AP-2 factors bind to the consensus sequence 5'-GCCNNNGGC-3' and activate genes involved in a large spectrum of important biological functions. This Danio rerio (Zebrafish) protein is Transcription factor AP-2-epsilon.